A 61-amino-acid polypeptide reads, in one-letter code: Small ribosomal subunit protein uS14 (61 aa).

Zn(2+) is bound by residues Cys24, Cys27, Cys40, and Cys43.

It belongs to the universal ribosomal protein uS14 family. Zinc-binding uS14 subfamily. As to quaternary structure, part of the 30S ribosomal subunit. Contacts proteins S3 and S10. Zn(2+) is required as a cofactor.

In terms of biological role, binds 16S rRNA, required for the assembly of 30S particles and may also be responsible for determining the conformation of the 16S rRNA at the A site. The polypeptide is Small ribosomal subunit protein uS14 (Mesoplasma florum (strain ATCC 33453 / NBRC 100688 / NCTC 11704 / L1) (Acholeplasma florum)).